A 252-amino-acid chain; its full sequence is Diphthine synthase (252 aa).

S-adenosyl-L-methionine is bound by residues Leu-9, Asp-85, Val-88, 113-114, Leu-165, Ala-204, and His-229; that span reads SI.

Belongs to the diphthine synthase family. Homodimer.

It carries out the reaction 2-[(3S)-amino-3-carboxypropyl]-L-histidyl-[translation elongation factor 2] + 3 S-adenosyl-L-methionine = diphthine-[translation elongation factor 2] + 3 S-adenosyl-L-homocysteine + 3 H(+). It functions in the pathway protein modification; peptidyl-diphthamide biosynthesis. In terms of biological role, S-adenosyl-L-methionine-dependent methyltransferase that catalyzes the trimethylation of the amino group of the modified target histidine residue in translation elongation factor 2 (EF-2), to form an intermediate called diphthine. The three successive methylation reactions represent the second step of diphthamide biosynthesis. The sequence is that of Diphthine synthase from Methanocorpusculum labreanum (strain ATCC 43576 / DSM 4855 / Z).